The primary structure comprises 429 residues: Enolase (429 aa).

A (2R)-2-phosphoglycerate-binding site is contributed by Q163. E205 functions as the Proton donor in the catalytic mechanism. Positions 242, 285, and 312 each coordinate Mg(2+). Residues K337, R366, S367, and K388 each contribute to the (2R)-2-phosphoglycerate site. The Proton acceptor role is filled by K337.

This sequence belongs to the enolase family. Mg(2+) serves as cofactor.

It localises to the cytoplasm. The protein localises to the secreted. The protein resides in the cell surface. It carries out the reaction (2R)-2-phosphoglycerate = phosphoenolpyruvate + H2O. It functions in the pathway carbohydrate degradation; glycolysis; pyruvate from D-glyceraldehyde 3-phosphate: step 4/5. In terms of biological role, catalyzes the reversible conversion of 2-phosphoglycerate (2-PG) into phosphoenolpyruvate (PEP). It is essential for the degradation of carbohydrates via glycolysis. The polypeptide is Enolase (Methylorubrum extorquens (strain CM4 / NCIMB 13688) (Methylobacterium extorquens)).